A 595-amino-acid chain; its full sequence is Probable inactive glycosyltransferase 25 family member 3 (595 aa).

The first 24 residues, 1 to 24 (MRAAPAAPLLQLLLLLGPRPEAAG), serve as a signal peptide directing secretion. N-linked (GlcNAc...) asparagine glycosylation is found at asparagine 75, asparagine 153, asparagine 237, and asparagine 360. A disordered region spans residues 576-595 (RLDLAGGSGHSLRPHPRDEL). Positions 592–595 (RDEL) match the Prevents secretion from ER motif.

The protein belongs to the glycosyltransferase 25 family.

It localises to the endoplasmic reticulum lumen. Its function is as follows. Probable cell adhesion protein involved in leukocyte transmigration across the blood-brain barrier. Does not express any beta-galactosyltransferase activity in vitro. The protein is Probable inactive glycosyltransferase 25 family member 3 (CERCAM) of Bos taurus (Bovine).